Reading from the N-terminus, the 482-residue chain is Proline--tRNA ligase (482 aa).

It belongs to the class-II aminoacyl-tRNA synthetase family. ProS type 3 subfamily. Homodimer.

The protein resides in the cytoplasm. It catalyses the reaction tRNA(Pro) + L-proline + ATP = L-prolyl-tRNA(Pro) + AMP + diphosphate. Functionally, catalyzes the attachment of proline to tRNA(Pro) in a two-step reaction: proline is first activated by ATP to form Pro-AMP and then transferred to the acceptor end of tRNA(Pro). The protein is Proline--tRNA ligase of Thermofilum pendens (strain DSM 2475 / Hrk 5).